The sequence spans 580 residues: Amino-acid acetyltransferase, mitochondrial (580 aa).

One can recognise an N-acetyltransferase domain in the interval 403–560; it reads LTMQNLFDDK…KLRHQNGVVD (158 aa).

This sequence belongs to the acetyltransferase family.

It is found in the mitochondrion. It carries out the reaction L-glutamate + acetyl-CoA = N-acetyl-L-glutamate + CoA + H(+). The protein operates within amino-acid biosynthesis; L-arginine biosynthesis; N(2)-acetyl-L-ornithine from L-glutamate: step 1/4. N-acetylglutamate synthase involved in arginine biosynthesis. The chain is Amino-acid acetyltransferase, mitochondrial (ARG2) from Candida albicans (strain SC5314 / ATCC MYA-2876) (Yeast).